Consider the following 451-residue polypeptide: Tubulin gamma-1 chain (451 aa).

Ser-131 bears the Phosphoserine; by BRSK1 mark. 142 to 148 (AGGTGSG) is a GTP binding site.

This sequence belongs to the tubulin family. As to quaternary structure, component of the gamma-tubulin ring complex (gTuRC) consisting of TUBGCP2, TUBGCP3, TUBGCP4, TUBGCP5 and TUBGCP6 and gamma-tubulin TUBG1 or TUBG2. TUBGCP2, TUBGCP3, TUBGCP4, TUBGCP5 and TUBGCP6 assemble in a 5:5:2:1:1 stoichiometry; each is associated with a gamma-tubulin, thereby arranging 14 gamma-tubulins in a helical manner. Gamma-tubulin at the first position is blocked by TUBGCP3 at the last position, allowing 13 protafilaments to grow into a microtubule. The gTuRC (via TUBGCP3 and TUBGCP6) interacts with ACTB and MZT1; the interactions form a luminal bridge that stabilizes the initial structure during complex assembly. The gTuRC (via TUBGCP2) interacts with MZT2A/MZT2B and CDK5RAP2 (via CM1 motif); the interactions play a role in gTuRC activation. Interacts with alpha-beta tubulin heterodimers; the interaction allows microtubules to nucleate from the gTuRC. Interacts with B9D2. Interacts with CDK5RAP2; the interaction is leading to centrosomal localization of TUBG1 and CDK5RAP2. Interacts with CIMAP3. Interacts with SAS6 and NUP62 at the centrosome. Interacts with EML3 (phosphorylated at 'Thr-881') and HAUS8. Interacts with DNM2; this interaction may participate in centrosome cohesion. Interacts with CCDC66. Phosphorylation at Ser-131 by BRSK1 regulates centrosome duplication, possibly by mediating relocation of gamma-tubulin and its associated proteins from the cytoplasm to the centrosome.

Its subcellular location is the cytoplasm. The protein localises to the cytoskeleton. It localises to the microtubule organizing center. It is found in the centrosome. The protein resides in the spindle. Its function is as follows. Tubulin is the major constituent of microtubules, protein filaments consisting of alpha- and beta-tubulin heterodimers. Gamma-tubulin is a key component of the gamma-tubulin ring complex (gTuRC) which mediates microtubule nucleation. The gTuRC regulates the minus-end nucleation of alpha-beta tubulin heterodimers that grow into microtubule protafilaments, a critical step in centrosome duplication and spindle formation. The polypeptide is Tubulin gamma-1 chain (Canis lupus familiaris (Dog)).